The following is a 367-amino-acid chain: MASSPVGVPSPQPSRANGNINLGPSANPNARPTDFDFLKVIGKGNYGKVLLAKRKSDGAFYAVKVLQKKSILKNKEQNHIMAERNVLLKNVRHPFLVGLRYSFQTPEKLYFVLDYVNGGELFFHLQRERRFLEPRARFYTAEVASAIGYLHSLNIIYRDLKPENILLDCQGHVVLTDFGLCKECVEPEETTSTFCGTPEYLAPEVLRKEPYDRAVDWWCLGAVLYEMLHGLPPFFNTDVAQMYENILHQPLQIPGGRTVAACDLLQGLLHKDQRQRLGSKEDFLDIKNHMFFSPINWDDLYHKRLTPPFNPNVEGPADLKHFDPEFTQEAVSKSIGCTPDTVASSSGASSAFLGFSYAQDDDDILDS.

The segment at 1–28 (MASSPVGVPSPQPSRANGNINLGPSANP) is disordered. S10 bears the Phosphoserine mark. Residues 15–28 (RANGNINLGPSANP) show a composition bias toward polar residues. Residues 35–292 (FDFLKVIGKG…FLDIKNHMFF (258 aa)) form the Protein kinase domain. ATP-binding positions include 41–49 (IGKGNYGKV) and K64. The Nuclear localization signal signature appears at 68-78 (KKSILKNKEQN). The active-site Proton acceptor is D159. T193 bears the Phosphothreonine; by PDPK1 mark. An AGC-kinase C-terminal domain is found at 293–367 (SPINWDDLYH…AQDDDDILDS (75 aa)). A phosphoserine mark is found at S334 and S356. Phosphotyrosine is present on Y357.

This sequence belongs to the protein kinase superfamily. AGC Ser/Thr protein kinase family. Post-translationally, activated by phosphorylation on Ser-356 by an unknown kinase (may be mTORC2 but not confirmed), transforming it into a substrate for PDPK1 which then phosphorylates it on Thr-193.

The protein resides in the cytoplasm. It is found in the nucleus. The enzyme catalyses L-seryl-[protein] + ATP = O-phospho-L-seryl-[protein] + ADP + H(+). The catalysed reaction is L-threonyl-[protein] + ATP = O-phospho-L-threonyl-[protein] + ADP + H(+). With respect to regulation, two specific sites, one in the kinase domain (Thr-193) and the other in the C-terminal regulatory region (Ser-356), need to be phosphorylated for its full activation. Its function is as follows. Serine/threonine-protein kinase which is involved in the regulation of a wide variety of ion channels, membrane transporters, cell growth, survival and proliferation. Up-regulates Na(+) channels: SCNN1A/ENAC, K(+) channels: KCNA3/Kv1.3, KCNE1 and KCNQ1, amino acid transporter: SLC6A19, glutamate transporter: SLC1A6/EAAT4, glutamate receptors: GRIA1/GLUR1 and GRIK2/GLUR6, Na(+)/H(+) exchanger: SLC9A3/NHE3, and the Na(+)/K(+) ATPase. The chain is Serine/threonine-protein kinase Sgk2 (Sgk2) from Mus musculus (Mouse).